The sequence spans 163 residues: uncharacterized protein (163 aa).

This is an uncharacterized protein from Rickettsia prowazekii (strain Madrid E).